Consider the following 364-residue polypeptide: Long-wave-sensitive opsin 1 (364 aa).

The disordered stretch occupies residues 1–23; sequence MAQQWSLQRLAGRHPQDSYEDST. Residues 1–52 are Extracellular-facing; that stretch reads MAQQWSLQRLAGRHPQDSYEDSTQSSIFTYTNSNSTRGPFEGPNYHIAPRWV. Residue Ser22 is glycosylated (O-linked (GlcNAc) serine). N-linked (GlcNAc...) asparagine glycosylation occurs at Asn34. The helical transmembrane segment at 53–77 threads the bilayer; the sequence is YHLTSVWMIFVVTASVFTNGLVLAA. The Cytoplasmic portion of the chain corresponds to 78-89; sequence TMKFKKLRHPLN. The helical transmembrane segment at 90 to 115 threads the bilayer; it reads WILVNLAVADLAETVIASTISIVNQV. Residues 116–129 are Extracellular-facing; that stretch reads SGYFVLGHPMCVLE. A disulfide bridge links Cys126 with Cys203. Residues 130-149 traverse the membrane as a helical segment; it reads GYTVSLCGITGLWSLAIISW. At 150–168 the chain is on the cytoplasmic side; sequence ERWMVVCKPFGNVRFDAKL. Residues 169–192 traverse the membrane as a helical segment; the sequence is AIVGIAFSWIWAAVWTAPPIFGWS. The Extracellular portion of the chain corresponds to 193–218; that stretch reads RYWPHGLKTSCGPDVFSGSSYPGVQS. Residues 219-246 form a helical membrane-spanning segment; sequence YMIVLMVTCCIIPLAIIMLCYLQVWLAI. Over 247-268 the chain is Cytoplasmic; sequence RAVAKQQKESESTQKAEKEVTR. A helical transmembrane segment spans residues 269–292; that stretch reads MVVVMIFAYCVCWGPYTFFACFAA. Residues 293-300 lie on the Extracellular side of the membrane; sequence ANPGYAFH. The helical transmembrane segment at 301 to 325 threads the bilayer; it reads PLMAALPAYFAKSATIYNPVIYVFM. At Lys312 the chain carries N6-(retinylidene)lysine. The Cytoplasmic segment spans residues 326–364; the sequence is NRQFRNCILQLFGKKVDDGSELSSASKTEVSSVSSVSPA.

The protein belongs to the G-protein coupled receptor 1 family. Opsin subfamily. In terms of processing, phosphorylated on some or all of the serine and threonine residues present in the C-terminal region. In terms of tissue distribution, the three color pigments are found in the cone photoreceptor cells.

The protein resides in the membrane. Its function is as follows. Visual pigments are the light-absorbing molecules that mediate vision. They consist of an apoprotein, opsin, covalently linked to cis-retinal. This Homo sapiens (Human) protein is Long-wave-sensitive opsin 1 (OPN1LW).